A 473-amino-acid chain; its full sequence is Zinc transporter SLC39A7 (473 aa).

A helical membrane pass occupies residues 11–31 (VAVGLLTWAALGLLVAGHGGH). Basic and acidic residues-rich tracts occupy residues 44-56 (GHSH…DFHH) and 66-114 (HTHE…EHSH). The interval 44 to 120 (GHSHRHSHED…EHSHGGYGES (77 aa)) is disordered. Histidine 66 carries the pros-methylhistidine modification. 3 helical membrane-spanning segments follow: residues 138–158 (ALGA…LIPV), 169–189 (LQIL…LHLI), and 214–234 (GPIL…LVVE). The segment at 243–316 (GHEHSHGHGH…QHSGEEKAGS (74 aa)) is disordered. Serine 278 and serine 279 each carry phosphoserine. Positions 298 to 316 (RPKDGPVRPQHSGEEKAGS) are enriched in basic and acidic residues. Residues 388-408 (LLTAVGALAGTAFALLTEGGA) traverse the membrane as a helical segment. The interval 428–473 (GDQAATQASPRSTSLPPVGEEDFREDPGPRQKGQQEKSGINVNCVS) is disordered. Residues 431 to 442 (AATQASPRSTSL) show a composition bias toward polar residues. The span at 452–462 (EDPGPRQKGQQ) shows a compositional bias: basic and acidic residues. Residues 463–473 (EKSGINVNCVS) show a composition bias toward polar residues.

The protein belongs to the ZIP transporter (TC 2.A.5) family. KE4/Catsup subfamily. In terms of assembly, homodimer. Methylation at some His residue by METTL9 leads to reduced zinc-binding. In terms of processing, rapidly phosphorylated by CK2 following Zn(2+) treatment. This phosphorylation is required for efficient cytosolic Zn(2+) release.

It is found in the endoplasmic reticulum membrane. It localises to the golgi apparatus. The protein resides in the cis-Golgi network membrane. It catalyses the reaction Zn(2+)(in) = Zn(2+)(out). Transports Zn(2+) from the endoplasmic reticulum (ER)/Golgi apparatus to the cytosol, playing an essential role in the regulation of cytosolic zinc levels. Acts as a gatekeeper of zinc release from intracellular stores, requiring post-translational activation by phosphorylation on residues, resulting in activation of multiple downstream pathways leading to cell growth and proliferation. Has an essential role in B cell development and is required for proper B cell receptor signaling. Plays an important role in maintaining intestinal epithelial homeostasis and skin dermis development by regulating ER function. Controls cell signaling pathways involved in glucose metabolism in skeletal muscle. Has a protective role against ER stress in different biological contexts. Mediates Zn(2+)-induced ferroptosis. The polypeptide is Zinc transporter SLC39A7 (SLC39A7) (Sus scrofa (Pig)).